The primary structure comprises 489 residues: Cysteine--tRNA ligase (489 aa).

C27 lines the Zn(2+) pocket. The 'HIGH' region signature appears at 29–39 (VTVYDLCHLGH). Zn(2+) contacts are provided by C211, H236, and E240. Positions 268-272 (KMSKS) match the 'KMSKS' region motif. Position 271 (K271) interacts with ATP.

The protein belongs to the class-I aminoacyl-tRNA synthetase family. Monomer. The cofactor is Zn(2+).

It localises to the cytoplasm. It catalyses the reaction tRNA(Cys) + L-cysteine + ATP = L-cysteinyl-tRNA(Cys) + AMP + diphosphate. The protein is Cysteine--tRNA ligase of Prochlorococcus marinus (strain MIT 9312).